The chain runs to 154 residues: Superoxide dismutase [Cu-Zn] (154 aa).

Residues His-47, His-49, and His-64 each coordinate Cu cation. A disulfide bridge links Cys-58 with Cys-147. Zn(2+) contacts are provided by His-64, His-72, His-81, and Asp-84. Cu cation is bound at residue His-121. The span at 125–137 (DDLGRGGNEESKK) shows a compositional bias: basic and acidic residues. The tract at residues 125 to 147 (DDLGRGGNEESKKTGNAGPRPAC) is disordered. Arg-144 is a substrate binding site.

This sequence belongs to the Cu-Zn superoxide dismutase family. In terms of assembly, homodimer. The cofactor is Cu cation. Zn(2+) is required as a cofactor.

Its subcellular location is the cytoplasm. It catalyses the reaction 2 superoxide + 2 H(+) = H2O2 + O2. Destroys radicals which are normally produced within the cells and which are toxic to biological systems. The polypeptide is Superoxide dismutase [Cu-Zn] (Aspergillus niger (strain ATCC MYA-4892 / CBS 513.88 / FGSC A1513)).